The primary structure comprises 200 residues: uncharacterized protein (200 aa).

Belongs to the HAD-like hydrolase superfamily. CbbY/CbbZ/Gph/YieH family.

This is an uncharacterized protein from Haemophilus influenzae (strain ATCC 51907 / DSM 11121 / KW20 / Rd).